A 508-amino-acid polypeptide reads, in one-letter code: UDP-N-acetylmuramoylalanine--D-glutamate ligase (508 aa).

Position 138–144 (G138–T144) interacts with ATP.

Belongs to the MurCDEF family.

It is found in the cytoplasm. It carries out the reaction UDP-N-acetyl-alpha-D-muramoyl-L-alanine + D-glutamate + ATP = UDP-N-acetyl-alpha-D-muramoyl-L-alanyl-D-glutamate + ADP + phosphate + H(+). Its pathway is cell wall biogenesis; peptidoglycan biosynthesis. Cell wall formation. Catalyzes the addition of glutamate to the nucleotide precursor UDP-N-acetylmuramoyl-L-alanine (UMA). The sequence is that of UDP-N-acetylmuramoylalanine--D-glutamate ligase from Bordetella avium (strain 197N).